The following is a 230-amino-acid chain: 7-cyano-7-deazaguanine synthase (230 aa).

Residue 8 to 18 (LSGGMDSAVVT) coordinates ATP. Residues cysteine 186, cysteine 196, cysteine 199, and cysteine 202 each contribute to the Zn(2+) site.

The protein belongs to the QueC family. Zn(2+) is required as a cofactor.

It carries out the reaction 7-carboxy-7-deazaguanine + NH4(+) + ATP = 7-cyano-7-deazaguanine + ADP + phosphate + H2O + H(+). The protein operates within purine metabolism; 7-cyano-7-deazaguanine biosynthesis. Its function is as follows. Catalyzes the ATP-dependent conversion of 7-carboxy-7-deazaguanine (CDG) to 7-cyano-7-deazaguanine (preQ(0)). The sequence is that of 7-cyano-7-deazaguanine synthase from Xylella fastidiosa (strain M23).